The primary structure comprises 477 residues: Histidine--tRNA ligase (477 aa).

This sequence belongs to the class-II aminoacyl-tRNA synthetase family. Homodimer.

It localises to the cytoplasm. It carries out the reaction tRNA(His) + L-histidine + ATP = L-histidyl-tRNA(His) + AMP + diphosphate + H(+). The sequence is that of Histidine--tRNA ligase (hisS) from Xanthomonas campestris pv. campestris (strain ATCC 33913 / DSM 3586 / NCPPB 528 / LMG 568 / P 25).